Here is a 94-residue protein sequence, read N- to C-terminus: Small ribosomal subunit protein bS16c (94 aa).

The protein belongs to the bacterial ribosomal protein bS16 family.

It localises to the plastid. The protein resides in the chloroplast. This chain is Small ribosomal subunit protein bS16c, found in Phalaenopsis aphrodite subsp. formosana (Moth orchid).